The following is a 588-amino-acid chain: Snake venom 5'-nucleotidase (588 aa).

A signal peptide spans methionine 1–glycine 40. 2 residues coordinate Zn(2+): aspartate 51 and histidine 53. A disulfide bond links cysteine 66 and cysteine 71. Residue asparagine 88 is glycosylated (N-linked (GlcNAc...) asparagine). Positions 99 and 131 each coordinate Zn(2+). The N-linked (GlcNAc...) asparagine glycan is linked to asparagine 167. Residues histidine 234 and histidine 257 each contribute to the Zn(2+) site. N-linked (GlcNAc...) asparagine glycosylation is found at asparagine 327, asparagine 347, and asparagine 361. Intrachain disulfides connect cysteine 367/cysteine 372 and cysteine 379/cysteine 401. Arginine 368 is an AMP binding site. AMP-binding residues include asparagine 404 and arginine 409. A glycan (N-linked (GlcNAc...) asparagine) is linked at asparagine 418. Phenylalanine 432 serves as a coordination point for AMP. A disulfide bridge connects residues cysteine 491 and cysteine 494. AMP-binding residues include phenylalanine 515 and aspartate 521. Residue asparagine 532 is glycosylated (N-linked (GlcNAc...) asparagine). Serine 564 carries the GPI-anchor amidated serine lipid modification. A propeptide spans alanine 565–leucine 588 (removed in mature form).

Belongs to the 5'-nucleotidase family. Zn(2+) is required as a cofactor. In terms of processing, venom 5'-nucleotidases (or a part thereof) may be released into the venom via exosome-like vesicles. They may be attached via a GPI anchor to the membrane of these vesicles. Soluble forms of 5'-nucleotidase might be released by cleavage of the ectodomain in the exosome-like vesicles or venom gland cells. Expressed by the venom gland.

The protein localises to the membrane. It carries out the reaction a ribonucleoside 5'-phosphate + H2O = a ribonucleoside + phosphate. Functionally, hydrolyzes nucleotides into nucleosides. Snake venom 5'-nucleotidases are widely distributed among venomous snake taxa, but there is a lack of information about their biological activities. They have been shown to inhibit platelet aggregation. This effect may be due to the liberation of inhibitory AMP or adenosine by its action on ADP released upon initiation of aggregation. Venom 5'-nucleotidases are also known to synergistically act in vivo with other toxins like ADPases, phospholipases, and disintegrins to exert a more pronounced anti-coagulant effect. This chain is Snake venom 5'-nucleotidase, found in Gloydius brevicauda (Korean slamosa snake).